Here is an 88-residue protein sequence, read N- to C-terminus: Cytochrome c oxidase subunit 6B2 (88 aa).

A disordered region spans residues 1-21 (MLGVQAQMPAPGQWTTPPFDP). The region spanning 29 to 75 (TRNCYQNFLDYHRCVKTMDRRGKNTQACDYYFRVFHSLCPVSWVQRW) is the CHCH domain. Positions 32–42 (CYQNFLDYHRC) match the Cx9C motif motif. 2 disulfides stabilise this stretch: Cys32–Cys67 and Cys42–Cys56. Residues 56–67 (CDYYFRVFHSLC) carry the Cx10C motif motif.

The protein belongs to the cytochrome c oxidase subunit 6B family. Component of the cytochrome c oxidase (complex IV, CIV), a multisubunit enzyme composed of 14 subunits. The complex is composed of a catalytic core of 3 subunits MT-CO1, MT-CO2 and MT-CO3, encoded in the mitochondrial DNA, and 11 supernumerary subunits COX4I, COX5A, COX5B, COX6A, COX6B, COX6C, COX7A, COX7B, COX7C, COX8 and NDUFA4, which are encoded in the nuclear genome. The complex exists as a monomer or a dimer and forms supercomplexes (SCs) in the inner mitochondrial membrane with NADH-ubiquinone oxidoreductase (complex I, CI) and ubiquinol-cytochrome c oxidoreductase (cytochrome b-c1 complex, complex III, CIII), resulting in different assemblies (supercomplex SCI(1)III(2)IV(1) and megacomplex MCI(2)III(2)IV(2)). In terms of tissue distribution, testis specific.

The protein localises to the mitochondrion inner membrane. It functions in the pathway energy metabolism; oxidative phosphorylation. Its function is as follows. Component of the cytochrome c oxidase, the last enzyme in the mitochondrial electron transport chain which drives oxidative phosphorylation. The respiratory chain contains 3 multisubunit complexes succinate dehydrogenase (complex II, CII), ubiquinol-cytochrome c oxidoreductase (cytochrome b-c1 complex, complex III, CIII) and cytochrome c oxidase (complex IV, CIV), that cooperate to transfer electrons derived from NADH and succinate to molecular oxygen, creating an electrochemical gradient over the inner membrane that drives transmembrane transport and the ATP synthase. Cytochrome c oxidase is the component of the respiratory chain that catalyzes the reduction of oxygen to water. Electrons originating from reduced cytochrome c in the intermembrane space (IMS) are transferred via the dinuclear copper A center (CU(A)) of subunit 2 and heme A of subunit 1 to the active site in subunit 1, a binuclear center (BNC) formed by heme A3 and copper B (CU(B)). The BNC reduces molecular oxygen to 2 water molecules using 4 electrons from cytochrome c in the IMS and 4 protons from the mitochondrial matrix. In Rattus norvegicus (Rat), this protein is Cytochrome c oxidase subunit 6B2 (Cox6b2).